The primary structure comprises 559 residues: ATP-dependent RNA helicase HAS1 (559 aa).

The interval 1–90 (MAPRSQSKSQ…TSEAEADEPG (90 aa)) is disordered. Basic and acidic residues-rich tracts occupy residues 9-22 (SQREPLRKRSREDA) and 55-75 (PDQKQKQKQSKDEKRLQELTK). The short motif at 93-121 (YSFEKADFSEPTMKAIKEMGFQKMTKVQA) is the Q motif element. A Helicase ATP-binding domain is found at 124 to 300 (IPPLLAGRDV…RISLRPGPLY (177 aa)). ATP is bound at residue 137-144 (AKTGSGKT). The short motif at 247-250 (DEAD) is the DEAD box element. A Helicase C-terminal domain is found at 314–484 (GLEQGYVVCD…NVQSQLTKLI (171 aa)).

This sequence belongs to the DEAD box helicase family. DDX18/HAS1 subfamily. Associates in the nucleolus with the 60S and pre-60S ribosomal subunits.

Its subcellular location is the nucleus. The protein localises to the nucleolus. It catalyses the reaction ATP + H2O = ADP + phosphate + H(+). Its function is as follows. ATP-dependent RNA helicase involved in 40S ribosomal subunit biogenesis. Required for the processing and cleavage of 35S pre-rRNA at sites A0, A1, and A2, leading to mature 18S rRNA. This Lodderomyces elongisporus (strain ATCC 11503 / CBS 2605 / JCM 1781 / NBRC 1676 / NRRL YB-4239) (Yeast) protein is ATP-dependent RNA helicase HAS1 (HAS1).